The sequence spans 444 residues: Inward rectifier potassium channel 4 (444 aa).

The Cytoplasmic portion of the chain corresponds to 1-55 (MHGHNRNGQAHVPRRKRRNRFVKKNGQCNVYFANLSNKSQRYMADIFTTCVDTRW). Residues 56-80 (RYMLMLFSAAFLVSWLFFGLLFWCI) form a helical membrane-spanning segment. At 81 to 119 (AFFHGDLEASPSVPAAGAPGGNGGAAPAAPKPCIMHVNG) the chain is on the extracellular side. Residues 120 to 131 (FLGAFLFSVETQ) constitute an intramembrane region (helical; Pore-forming). The segment at residues 132 to 138 (TTIGYGF) is an intramembrane region (pore-forming). Residues 133 to 138 (TIGYGF) carry the Selectivity filter motif. Over 139-147 (RCVTEECPL) the chain is Extracellular. Residues 148–169 (AVIAVVVQSIVGCVIDSFMIGT) traverse the membrane as a helical segment. The Cytoplasmic segment spans residues 170–444 (IMAKMARPKK…NISYRRESAI (275 aa)). The PDZ-binding motif lies at 442-444 (SAI).

The protein belongs to the inward rectifier-type potassium channel (TC 1.A.2.1) family. KCNJ4 subfamily. In terms of assembly, homomultimeric and heteromultimeric association with KCNJ2 and KCNJ12. Interacts with DLG2 and DLG4. Associates, via its PDZ-recognition domain, with a complex containing LIN7A, LIN7B, LIN7C, DLG1, CASK and APBA1. Interacts with TAX1BP3. TAX1BP3 competes with LIN7 family members for KCNJ4 binding.

Its subcellular location is the cell membrane. It is found in the postsynaptic cell membrane. It localises to the cytoplasmic vesicle membrane. The enzyme catalyses K(+)(in) = K(+)(out). Inward rectifier potassium channels are characterized by a greater tendency to allow potassium to flow into the cell rather than out of it. Their voltage dependence is regulated by the concentration of extracellular potassium; as external potassium is raised, the voltage range of the channel opening shifts to more positive voltages. The inward rectification is mainly due to the blockage of outward current by internal magnesium. Can be blocked by extracellular barium and cesium. This chain is Inward rectifier potassium channel 4 (KCNJ4), found in Mesocricetus auratus (Golden hamster).